Consider the following 556-residue polypeptide: Urocanate hydratase (556 aa).

NAD(+) is bound by residues 52 to 53 (GG), Gln130, 176 to 178 (GMG), Glu196, Arg201, 242 to 243 (NA), 263 to 267 (QTSAH), 273 to 274 (YL), and Tyr322. Cys410 is an active-site residue. Residue Gly492 coordinates NAD(+).

It belongs to the urocanase family. The cofactor is NAD(+).

It is found in the cytoplasm. It catalyses the reaction 4-imidazolone-5-propanoate = trans-urocanate + H2O. It functions in the pathway amino-acid degradation; L-histidine degradation into L-glutamate; N-formimidoyl-L-glutamate from L-histidine: step 2/3. Functionally, catalyzes the conversion of urocanate to 4-imidazolone-5-propionate. The sequence is that of Urocanate hydratase from Acidiphilium cryptum (strain JF-5).